The sequence spans 500 residues: Plexin domain-containing protein 1 (500 aa).

The first 18 residues, 1–18 (MRGELWLLVLVLREAARA), serve as a signal peptide directing secretion. Residues 19–426 (LSPQPGAGHD…TKGTPVHLGT (408 aa)) are Extracellular-facing. Disordered regions lie at residues 20-39 (SPQPGAGHDEGPGSGWAAKG) and 46-78 (RRARESPGHVSEPDRTQLSQDLGGGTLAMDTLP). A glycan (O-linked (Xyl...) (chondroitin sulfate) serine) is linked at Ser-33. Positions 47-60 (RARESPGHVSEPDR) are enriched in basic and acidic residues. Residues Asn-80 and Asn-197 are each glycosylated (N-linked (GlcNAc...) asparagine). Positions 359 to 379 (FQDEDHDSASPDTSFSPYDGD) are disordered. A compositionally biased stretch (polar residues) spans 368–379 (SPDTSFSPYDGD). The helical transmembrane segment at 427–447 (IVGIVLAVLLVAAIILAGIYI) threads the bilayer. Topologically, residues 448 to 500 (NGHPTSNAALFFIERRPHHWPAMKFRSHPDHSTYAEVEPSGHEKEGFMEAEQC) are cytoplasmic. Over residues 479 to 494 (STYAEVEPSGHEKEGF) the composition is skewed to basic and acidic residues. Residues 479–500 (STYAEVEPSGHEKEGFMEAEQC) are disordered.

The protein belongs to the plexin family. As to quaternary structure, interacts with NID1. May interact with CTTN. Post-translationally, N-glycosylated. Detected in urine (at protein level). Detected in endothelial cells from colorectal cancer, and in endothelial cells from primary cancers of the lung, liver, pancreas, breast and brain. Not detectable in endothelial cells from normal tissue. Expressed in fibrovascular membrane with increased expression in individuals with proliferative diabetic retinopathy.

The protein resides in the secreted. The protein localises to the cell membrane. It localises to the cell junction. Its subcellular location is the tight junction. It is found in the cytoplasm. Plays a critical role in endothelial cell capillary morphogenesis. In Homo sapiens (Human), this protein is Plexin domain-containing protein 1 (PLXDC1).